A 1035-amino-acid polypeptide reads, in one-letter code: MQDPDGIDINTKIFNSVAEVFQKAQGSYAGHRKHIAVLKKIQSKAVEQGYEDAFNFWFDKLVTKILPLKKNEIIGDRIVKLVAAFIASLERELILAKKQNYKLTNDEEGIFSRFVDQFIRHVLRGVESPDKNVRFRVLQLLAVIMDNIGEIDESLFNLLILSLNKRIYDREPTVRIQAVFCLTKFQDEEQTEHLTELSDNEENFEATRTLVASIQNDPSAEVRRAAMLNLINDNNTRPYILERARDVNIVNRRLVYSRILKSMGRKCFDDIEPHIFDQLIEWGLEDRELSVRNACKRLIAHDWLNALDGDLIELLEKLDVSRSSVCVKAIEALFQSRPDILSKIKFPESIWKDFTVEIAFLFRAIYLYCLDNNITEMLEENFPEASKLSEHLNHYILLRYHHNDISNDSQSHFDYNTLEFIIEQLSIAAERYDYSDEVGRRSMLTVVRNMLALTTLSEPLIKIGIRVMKSLSINEKDFVTMAIEIINDIRDDDIEKQEQEEKIKSKKINRRNETSVDEEDENGTHNDEVNEDEEDDNISSFHSAVENLVQGNGNVSESDIINNLPPEKEASSATIVLCLTRSSYMLELVNTPLTENILIASLMDTLITPAVRNTAPNIRELGVKNLGLCCLLDVKLAIDNMYILGMCVSKGNASLKYIALQVIVDIFSVHGNTVVDGEGKVDSISLHKIFYKVLKNNGLPECQVIAAEGLCKLFLADVFTDDDLFETLVLSYFSPINSSNEALVQAFAFCIPVYCFSHPAHQQRMSRTAADILLRLCVLWDDLQSSVIPEVDREAMLKPNIIFQQLLFWTDPRNLVNQTGSTKKDTVQLTFLIDVLKIYAQIEKKEIKKMIITNINAIFLSSEQDYSTLKELLEYSDDIAENDNLDNVSKNALDKLRNNLNSLIEEINERSETQTKDENNTANDQYSSILGNSFNKSSNDTIEHAADITDGNNTELTKTTVNISAVDNTTEQSNSRKRTRSEAEQIDTSKNLENMSIQDTSTVAKNVSFVLPDEKSDAMSIDEEDKDSESFSEVC.

HEAT repeat units follow at residues 113 to 150 and 153 to 191; these read RFVDQFIRHVLRGVESPDKNVRFRVLQLLAVIMDNIGE and ESLFNLLILSLNKRIYDREPTVRIQAVFCLTKFQDEEQT. Residue serine 198 is modified to Phosphoserine. The stretch at 201–239 is one HEAT 3 repeat; it reads EENFEATRTLVASIQNDPSAEVRRAAMLNLINDNNTRPY. Residues 500-536 form a disordered region; sequence EEKIKSKKINRRNETSVDEEDENGTHNDEVNEDEEDD. 2 HEAT repeats span residues 597-635 and 827-864; these read ILIASLMDTLITPAVRNTAPNIRELGVKNLGLCCLLDVK and VQLTFLIDVLKIYAQIEKKEIKKMIITNINAIFLSSEQ. Residues 909–919 show a composition bias toward basic and acidic residues; it reads ERSETQTKDEN. 2 disordered regions span residues 909-934 and 959-995; these read ERSETQTKDENNTANDQYSSILGNSF and TTVNISAVDNTTEQSNSRKRTRSEAEQIDTSKNLENM. Polar residues-rich tracts occupy residues 920-934 and 959-973; these read NTANDQYSSILGNSF and TTVNISAVDNTTEQS. Serine 933 carries the post-translational modification Phosphoserine. Residue serine 981 is modified to Phosphoserine. Polar residues predominate over residues 986-995; sequence IDTSKNLENM. Serine 1008 is subject to Phosphoserine. The tract at residues 1012 to 1035 is disordered; it reads PDEKSDAMSIDEEDKDSESFSEVC.

The protein belongs to the CND3 (condensin subunit 3) family. Component of the condensin complex, which contains the SMC2 and SMC4 heterodimer, and three non SMC subunits that probably regulate the complex: BRN1, YCS4 and YCG1/YCS5.

It is found in the nucleus. The protein resides in the cytoplasm. It localises to the chromosome. Regulatory subunit of the condensin complex, a complex required for conversion of interphase chromatin into mitotic-like condense chromosomes. The condensin complex probably introduces positive supercoils into relaxed DNA in the presence of type I topoisomerases and converts nicked DNA into positive knotted forms in the presence of type II topoisomerases. The condensin complex probably also plays a role during interphase. This is Condensin complex subunit 3 (YCG1) from Saccharomyces cerevisiae (strain ATCC 204508 / S288c) (Baker's yeast).